We begin with the raw amino-acid sequence, 471 residues long: MDLVIGGKFKLGRKIGSGSFGELYLGINVQTGEEVAVKLESVKTKHPQLHYESKLYMLLQGGTGVPNLKWYGVEGDYNVMVIDLLGPSLEDLFNYCNRKLSLKTVLMLADQLINRVEFMHTRGFLHRDIKPDNFLMGLGRKANQVYIIDFGLGKKYRDLQTHRHIPYRENKNLTGTARYASVNTHLGVEQSRRDDLEALGYVLMYFLKGSLPWQGLKAGTKKQKYDRISEKKVATPIEVLCKNQPSEFVSYFRYCRSLRFDDKPDYSYLKRLFRDLFIREGYQFDYVFDWTVLKYPQIGSSSGSSSRTRNHTTANPGLTAGASLEKQERIAGKETRENRFSGAVEAFSRRHPATSTTRDRSASRNSVDGPLSKHPPGDSERPRSSSRYGSSSRRAIPSSSRPSSAGGPSDSRSSSRLVTSTGGVGTVSNRASTSQRIQAGNESRTSSFSRAARNTREDPLRRSLELLTLRK.

In terms of domain architecture, Protein kinase spans 9–278; it reads FKLGRKIGSG…LKRLFRDLFI (270 aa). ATP is bound by residues 15–23 and lysine 38; that span reads IGSGSFGEL. Aspartate 128 functions as the Proton acceptor in the catalytic mechanism. The interval 300–471 is disordered; sequence SSSGSSSRTR…RSLELLTLRK (172 aa). A compositionally biased stretch (basic and acidic residues) spans 325-339; the sequence is EKQERIAGKETRENR. The span at 385–430 shows a compositional bias: low complexity; sequence SSRYGSSSRRAIPSSSRPSSAGGPSDSRSSSRLVTSTGGVGTVSNR. Over residues 431–449 the composition is skewed to polar residues; the sequence is ASTSQRIQAGNESRTSSFS. Positions 454 to 464 are enriched in basic and acidic residues; it reads NTREDPLRRSL.

It belongs to the protein kinase superfamily. CK1 Ser/Thr protein kinase family. Casein kinase I subfamily. Monomer. Autophosphorylated on serine, threonine and tyrosine residues. In terms of tissue distribution, expressed in leaves, stems and flowers.

It is found in the cytoplasm. The protein resides in the nucleus. It catalyses the reaction L-seryl-[protein] + ATP = O-phospho-L-seryl-[protein] + ADP + H(+). The catalysed reaction is L-threonyl-[protein] + ATP = O-phospho-L-threonyl-[protein] + ADP + H(+). Casein kinases are operationally defined by their preferential utilization of acidic proteins such as caseins as substrates. Can phosphorylate casein on serine and threonine residues, and poly(Glu,Tyr) in vitro. This chain is Casein kinase 1-like protein 9, found in Arabidopsis thaliana (Mouse-ear cress).